A 657-amino-acid polypeptide reads, in one-letter code: Trifunctional protein RibF/MnmA (657 aa).

The tract at residues 1–141 is FMN adenylyltransferase; it reads MLSIINLTSK…VVKKDHCSTS (141 aa). The segment at 158–282 is riboflavin kinase; it reads LLLTPFYLKG…DKKAALSFFH (125 aa). The tRNA-specific 2-thiouridylase MnmA stretch occupies residues 283–657; it reads KQEKPKVVVA…GGGKITKIIK (375 aa). ATP-binding positions include 292–299 and M318; that span reads ALSGGVDS. The interval 389–391 is interaction with target base in tRNA; that stretch reads NPD. Residue C394 is the Nucleophile of the active site. C394 and C492 are disulfide-bonded. Residue G420 coordinates ATP. Positions 442–444 are interaction with tRNA; it reads KDQ. C492 serves as the catalytic Cysteine persulfide intermediate.

In the N-terminal section; belongs to the RibF family. This sequence in the C-terminal section; belongs to the MnmA/TRMU family.

It is found in the cytoplasm. The enzyme catalyses riboflavin + ATP = FMN + ADP + H(+). The catalysed reaction is FMN + ATP + H(+) = FAD + diphosphate. It carries out the reaction S-sulfanyl-L-cysteinyl-[protein] + uridine(34) in tRNA + AH2 + ATP = 2-thiouridine(34) in tRNA + L-cysteinyl-[protein] + A + AMP + diphosphate + H(+). It participates in cofactor biosynthesis; FAD biosynthesis; FAD from FMN: step 1/1. It functions in the pathway cofactor biosynthesis; FMN biosynthesis; FMN from riboflavin (ATP route): step 1/1. Its function is as follows. Involved in FAD and FMN biosynthesis. Functionally, catalyzes the 2-thiolation of uridine at the wobble position (U34) of tRNA, leading to the formation of s(2)U34. This Mycoplasmoides gallisepticum (strain R(low / passage 15 / clone 2)) (Mycoplasma gallisepticum) protein is Trifunctional protein RibF/MnmA (ribF/mnmA).